We begin with the raw amino-acid sequence, 178 residues long: Protein GrpE (178 aa).

The segment covering 1-11 (MENTQENPTDQ) has biased composition (polar residues). Residues 1–31 (MENTQENPTDQTTEETGREAQAAENAAPAAE) form a disordered region. Positions 19–31 (EAQAAENAAPAAE) are enriched in low complexity.

It belongs to the GrpE family. In terms of assembly, homodimer.

It is found in the cytoplasm. Participates actively in the response to hyperosmotic and heat shock by preventing the aggregation of stress-denatured proteins, in association with DnaK and GrpE. It is the nucleotide exchange factor for DnaK and may function as a thermosensor. Unfolded proteins bind initially to DnaJ; upon interaction with the DnaJ-bound protein, DnaK hydrolyzes its bound ATP, resulting in the formation of a stable complex. GrpE releases ADP from DnaK; ATP binding to DnaK triggers the release of the substrate protein, thus completing the reaction cycle. Several rounds of ATP-dependent interactions between DnaJ, DnaK and GrpE are required for fully efficient folding. This is Protein GrpE from Burkholderia thailandensis (strain ATCC 700388 / DSM 13276 / CCUG 48851 / CIP 106301 / E264).